A 443-amino-acid polypeptide reads, in one-letter code: Xaa-Pro dipeptidase (443 aa).

Mn(2+)-binding residues include Asp246, Asp257, His339, Glu384, and Glu423.

Belongs to the peptidase M24B family. Bacterial-type prolidase subfamily. The cofactor is Mn(2+).

The catalysed reaction is Xaa-L-Pro dipeptide + H2O = an L-alpha-amino acid + L-proline. Its function is as follows. Splits dipeptides with a prolyl residue in the C-terminal position. This is Xaa-Pro dipeptidase from Salmonella paratyphi B (strain ATCC BAA-1250 / SPB7).